The chain runs to 108 residues: Ig kappa chain V region GOM (108 aa).

The framework-1 stretch occupies residues D1–C23. An intrachain disulfide couples C23 to C88. Residues R24–N34 are complementarity-determining-1. Positions W35 to E49 are framework-2. Residues P44 to G66 form a disordered region. Residues Q50–S56 are complementarity-determining-2. Residues G57–C88 form a framework-3 region. Residues M89–T97 are complementarity-determining-3. The interval F98–R107 is framework-4.

In Canis lupus familiaris (Dog), this protein is Ig kappa chain V region GOM.